The following is a 300-amino-acid chain: N-acetylmuramic acid 6-phosphate etherase 1 (300 aa).

The 164-residue stretch at 57–220 (IATAFAQGGR…TTGAMIKSGK (164 aa)) folds into the SIS domain. The active-site Proton donor is E85. E116 is an active-site residue.

The protein belongs to the GCKR-like family. MurNAc-6-P etherase subfamily. As to quaternary structure, homodimer.

The enzyme catalyses N-acetyl-D-muramate 6-phosphate + H2O = N-acetyl-D-glucosamine 6-phosphate + (R)-lactate. The protein operates within amino-sugar metabolism; 1,6-anhydro-N-acetylmuramate degradation. Its pathway is amino-sugar metabolism; N-acetylmuramate degradation. It functions in the pathway cell wall biogenesis; peptidoglycan recycling. Specifically catalyzes the cleavage of the D-lactyl ether substituent of MurNAc 6-phosphate, producing GlcNAc 6-phosphate and D-lactate. Together with AnmK, is also required for the utilization of anhydro-N-acetylmuramic acid (anhMurNAc) either imported from the medium or derived from its own cell wall murein, and thus plays a role in cell wall recycling. The sequence is that of N-acetylmuramic acid 6-phosphate etherase 1 from Vibrio cholerae serotype O1 (strain ATCC 39315 / El Tor Inaba N16961).